Here is a 334-residue protein sequence, read N- to C-terminus: MRFVDEVVIKLQAGKGGNGCVSFRREKYVPRGGPDGGDGGNGGSIYLKADENVNTLIDYRYKREYYAENGRPGEGRNCYGKAGEDLYLVVPVGTSVFDIDTNKKIGEVLQHGQTFKLVSGGKRGIGNTHFKSSTNQAPRKFTLGEEGEYKEVRLELNLLADVALLGLPNAGKSTLIRSVSEATPKVADYPFTTMYPHLGVVKVGVDSFVMADIPGVIEGAAEGAGLGLRFLKHLTRARCVLHVVDICPFNESDPVENYFAVEKELEKYSQELFDKPRFLVINKIDLLADKVEQKCQEFVEQIGYQGNYYTISAAMKKGTDELAKKLNEFLQKQE.

The region spanning 1-159 is the Obg domain; that stretch reads MRFVDEVVIK…KEVRLELNLL (159 aa). Residues 160–331 form the OBG-type G domain; it reads ADVALLGLPN…LAKKLNEFLQ (172 aa). GTP contacts are provided by residues 166–173, 191–195, 212–215, 282–285, and 312–314; these read GLPNAGKS, FTTMY, DIPG, NKID, and SAA. Mg(2+)-binding residues include S173 and T193.

This sequence belongs to the TRAFAC class OBG-HflX-like GTPase superfamily. OBG GTPase family. As to quaternary structure, monomer. Mg(2+) serves as cofactor.

The protein localises to the cytoplasm. In terms of biological role, an essential GTPase which binds GTP, GDP and possibly (p)ppGpp with moderate affinity, with high nucleotide exchange rates and a fairly low GTP hydrolysis rate. Plays a role in control of the cell cycle, stress response, ribosome biogenesis and in those bacteria that undergo differentiation, in morphogenesis control. The polypeptide is GTPase Obg (Francisella tularensis subsp. tularensis (strain FSC 198)).